We begin with the raw amino-acid sequence, 638 residues long: Probable inactive receptor kinase At4g23740 (638 aa).

The N-terminal stretch at 1–24 (MEALRIYLWSLCLSLCLIIYGANS) is a signal peptide. LRR repeat units lie at residues 94-117 (ALRVLSLRSNLISGEFPKDFVELK), 118-139 (DLAFLYLQDNNLSGPLPLDFSV), 142-165 (NLTSVNLSNNGFNGTIPSSLSRLK), 166-188 (RIQSLNLANNTLSGDIPDLSVLS), and 189-198 (SLQHIDLSNN). The chain crosses the membrane as a helical span at residues 257–277 (VFLLIVIAVSIVVITALAFVL). The Protein kinase domain maps to 337–608 (RASAEVLGKG…SDLVRLIENV (272 aa)). Ser339 carries the phosphoserine modification. 343–351 (LGKGTFGTT) is an ATP binding site. Position 360 is a phosphothreonine (Thr360). Lys365 provides a ligand contact to ATP. Residues Ser416 and Ser419 each carry the phosphoserine modification. Residues Thr436 and Thr509 each carry the phosphothreonine modification. Ser513 is modified (phosphoserine). The tract at residues 612–638 (RTSIEPEPELKPKSENGASETSTPSEI) is disordered. The span at 613–625 (TSIEPEPELKPKS) shows a compositional bias: basic and acidic residues. The segment covering 627 to 638 (NGASETSTPSEI) has biased composition (polar residues).

This sequence belongs to the protein kinase superfamily.

Its subcellular location is the membrane. The protein is Probable inactive receptor kinase At4g23740 of Arabidopsis thaliana (Mouse-ear cress).